Consider the following 280-residue polypeptide: Nuclear egress protein 1 (280 aa).

The CCCH-type zinc-finger motif lies at 86–203 (CLTLSPYGHS…YIIFTSLTLH (118 aa)).

This sequence belongs to the herpesviridae NEC1 protein family. Forms a heterohexameric complex with NEC2. Interacts with capsid vertex specific component 2/CVC2; this interaction directs the capsid to the host inner nuclear membrane to initiate budding. In terms of processing, phosphorylated at serine residues in the N-terminus. This phosphorylation regulates the localization within the inner nuclear membrane.

The protein resides in the host nucleus inner membrane. In terms of biological role, plays an essential role in virion nuclear egress, the first step of virion release from infected cell. Within the host nucleus, NEC1 interacts with the newly formed capsid through the vertexes and directs it to the inner nuclear membrane by associating with NEC2. Induces the budding of the capsid at the inner nuclear membrane as well as its envelopment into the perinuclear space. There, the NEC1/NEC2 complex promotes the fusion of the enveloped capsid with the outer nuclear membrane and the subsequent release of the viral capsid into the cytoplasm where it will reach the secondary budding sites in the host Golgi or trans-Golgi network. The chain is Nuclear egress protein 1 from Alcelaphine herpesvirus 1 (strain C500) (AlHV-1).